Reading from the N-terminus, the 320-residue chain is Probable cell division protein WhiA (320 aa).

Positions 276–310 (TLKELGELVSGGKISKSGINHRLRKIDEIAERLRA) form a DNA-binding region, H-T-H motif.

It belongs to the WhiA family.

Involved in cell division and chromosome segregation. The polypeptide is Probable cell division protein WhiA (Geobacillus sp. (strain WCH70)).